The chain runs to 264 residues: Thymidylate synthase (264 aa).

A dUMP-binding site is contributed by R21. H51 contacts (6R)-5,10-methylene-5,6,7,8-tetrahydrofolate. 126-127 (RR) lines the dUMP pocket. C146 (nucleophile) is an active-site residue. DUMP contacts are provided by residues 166 to 169 (RSCD), N177, and 207 to 209 (HLY). D169 is a binding site for (6R)-5,10-methylene-5,6,7,8-tetrahydrofolate. Position 263 (A263) interacts with (6R)-5,10-methylene-5,6,7,8-tetrahydrofolate.

It belongs to the thymidylate synthase family. Bacterial-type ThyA subfamily. As to quaternary structure, homodimer.

Its subcellular location is the cytoplasm. It catalyses the reaction dUMP + (6R)-5,10-methylene-5,6,7,8-tetrahydrofolate = 7,8-dihydrofolate + dTMP. It functions in the pathway pyrimidine metabolism; dTTP biosynthesis. Catalyzes the reductive methylation of 2'-deoxyuridine-5'-monophosphate (dUMP) to 2'-deoxythymidine-5'-monophosphate (dTMP) while utilizing 5,10-methylenetetrahydrofolate (mTHF) as the methyl donor and reductant in the reaction, yielding dihydrofolate (DHF) as a by-product. This enzymatic reaction provides an intracellular de novo source of dTMP, an essential precursor for DNA biosynthesis. This Shewanella sp. (strain MR-4) protein is Thymidylate synthase.